A 171-amino-acid chain; its full sequence is 3-hydroxydecanoyl-[acyl-carrier-protein] dehydratase (171 aa).

The active site involves His-70.

This sequence belongs to the thioester dehydratase family. FabA subfamily. In terms of assembly, homodimer.

Its subcellular location is the cytoplasm. It catalyses the reaction a (3R)-hydroxyacyl-[ACP] = a (2E)-enoyl-[ACP] + H2O. It carries out the reaction (3R)-hydroxydecanoyl-[ACP] = (2E)-decenoyl-[ACP] + H2O. The catalysed reaction is (2E)-decenoyl-[ACP] = (3Z)-decenoyl-[ACP]. It functions in the pathway lipid metabolism; fatty acid biosynthesis. Necessary for the introduction of cis unsaturation into fatty acids. Catalyzes the dehydration of (3R)-3-hydroxydecanoyl-ACP to E-(2)-decenoyl-ACP and then its isomerization to Z-(3)-decenoyl-ACP. Can catalyze the dehydratase reaction for beta-hydroxyacyl-ACPs with saturated chain lengths up to 16:0, being most active on intermediate chain length. The polypeptide is 3-hydroxydecanoyl-[acyl-carrier-protein] dehydratase (Photobacterium profundum (strain SS9)).